The sequence spans 211 residues: Large ribosomal subunit protein bL25 (211 aa).

Positions 188-211 (APKAAKVSTDDEAAAPAEEAPAAE) are disordered. The span at 201–211 (AAPAEEAPAAE) shows a compositional bias: low complexity.

This sequence belongs to the bacterial ribosomal protein bL25 family. CTC subfamily. In terms of assembly, part of the 50S ribosomal subunit; part of the 5S rRNA/L5/L18/L25 subcomplex. Contacts the 5S rRNA. Binds to the 5S rRNA independently of L5 and L18.

In terms of biological role, this is one of the proteins that binds to the 5S RNA in the ribosome where it forms part of the central protuberance. The polypeptide is Large ribosomal subunit protein bL25 (Colwellia psychrerythraea (strain 34H / ATCC BAA-681) (Vibrio psychroerythus)).